Here is a 356-residue protein sequence, read N- to C-terminus: Branched-chain-amino-acid aminotransferase 6 (356 aa).

The residue at position 199 (lysine 199) is an N6-(pyridoxal phosphate)lysine.

The protein belongs to the class-IV pyridoxal-phosphate-dependent aminotransferase family. Pyridoxal 5'-phosphate is required as a cofactor.

Its subcellular location is the cytoplasm. The catalysed reaction is L-leucine + 2-oxoglutarate = 4-methyl-2-oxopentanoate + L-glutamate. It carries out the reaction L-isoleucine + 2-oxoglutarate = (S)-3-methyl-2-oxopentanoate + L-glutamate. The enzyme catalyses L-valine + 2-oxoglutarate = 3-methyl-2-oxobutanoate + L-glutamate. It functions in the pathway amino-acid biosynthesis; L-isoleucine biosynthesis; L-isoleucine from 2-oxobutanoate: step 4/4. The protein operates within amino-acid biosynthesis; L-leucine biosynthesis; L-leucine from 3-methyl-2-oxobutanoate: step 4/4. Its pathway is amino-acid biosynthesis; L-valine biosynthesis; L-valine from pyruvate: step 4/4. Functionally, converts 2-oxo acids to branched-chain amino acids. Acts on leucine, isoleucine and valine. The polypeptide is Branched-chain-amino-acid aminotransferase 6 (BCAT6) (Arabidopsis thaliana (Mouse-ear cress)).